The primary structure comprises 352 residues: SNF1-related protein kinase regulatory subunit gamma-like PV42a (352 aa).

4 consecutive CBS domains span residues 24–106 (RNRR…LSDL), 122–196 (LEGL…FDDL), 210–281 (VNDS…ELQT), and 297–352 (KERE…STLS).

Belongs to the 5'-AMP-activated protein kinase gamma subunit family. Expressed highly in rosette leaves, cauline leaves, open flowers, developing siliques and dry seeds, but at a low level in stems and floral buds.

Functionally, plays redundant role with PV42b in regulating male gametogenesis and pollen tube guidance. This chain is SNF1-related protein kinase regulatory subunit gamma-like PV42a (PV42A), found in Arabidopsis thaliana (Mouse-ear cress).